Consider the following 500-residue polypeptide: Glycerol kinase (500 aa).

ADP is bound at residue T12. ATP is bound by residues T12, T13, and S14. T12 is a sn-glycerol 3-phosphate binding site. R16 lines the ADP pocket. Positions 82, 83, 135, and 245 each coordinate sn-glycerol 3-phosphate. 5 residues coordinate glycerol: R82, E83, Y135, D245, and Q246. Positions 267 and 310 each coordinate ADP. ATP is bound by residues T267, G310, Q314, and G411. ADP is bound by residues G411 and N415.

The protein belongs to the FGGY kinase family. Homotetramer and homodimer (in equilibrium).

It catalyses the reaction glycerol + ATP = sn-glycerol 3-phosphate + ADP + H(+). It participates in polyol metabolism; glycerol degradation via glycerol kinase pathway; sn-glycerol 3-phosphate from glycerol: step 1/1. With respect to regulation, activated by phosphorylation and inhibited by fructose 1,6-bisphosphate (FBP). In terms of biological role, key enzyme in the regulation of glycerol uptake and metabolism. Catalyzes the phosphorylation of glycerol to yield sn-glycerol 3-phosphate. The polypeptide is Glycerol kinase (Clostridium perfringens (strain 13 / Type A)).